The sequence spans 170 residues: Photosystem I assembly protein Ycf3 (170 aa).

TPR repeat units follow at residues 35 to 68 (AFCYYRDGMSAQSEGEYAEALENYYEALRLEEDP), 72 to 105 (SYIIYNIGLIYASNGEHIKALEYYHQSLELNPRL), and 120 to 153 (GLKAADKQDNNMSKSMFDKAAEYWKQAIYLAPNN).

It belongs to the Ycf3 family.

Its subcellular location is the plastid. The protein resides in the chloroplast thylakoid membrane. Essential for the assembly of the photosystem I (PSI) complex. May act as a chaperone-like factor to guide the assembly of the PSI subunits. This is Photosystem I assembly protein Ycf3 from Gracilaria tenuistipitata var. liui (Red alga).